The following is an 86-amino-acid chain: ATP synthase subunit c (86 aa).

The next 2 helical transmembrane spans lie at 13-33 (FFAT…AGLA) and 63-83 (ILGQ…AFIL).

The protein belongs to the ATPase C chain family. In terms of assembly, F-type ATPases have 2 components, F(1) - the catalytic core - and F(0) - the membrane proton channel. F(1) has five subunits: alpha(3), beta(3), gamma(1), delta(1), epsilon(1). F(0) has three main subunits: a(1), b(2) and c(10-14). The alpha and beta chains form an alternating ring which encloses part of the gamma chain. F(1) is attached to F(0) by a central stalk formed by the gamma and epsilon chains, while a peripheral stalk is formed by the delta and b chains.

It localises to the cell membrane. F(1)F(0) ATP synthase produces ATP from ADP in the presence of a proton or sodium gradient. F-type ATPases consist of two structural domains, F(1) containing the extramembraneous catalytic core and F(0) containing the membrane proton channel, linked together by a central stalk and a peripheral stalk. During catalysis, ATP synthesis in the catalytic domain of F(1) is coupled via a rotary mechanism of the central stalk subunits to proton translocation. Its function is as follows. Key component of the F(0) channel; it plays a direct role in translocation across the membrane. A homomeric c-ring of between 10-14 subunits forms the central stalk rotor element with the F(1) delta and epsilon subunits. This is ATP synthase subunit c from Acholeplasma laidlawii (strain PG-8A).